The primary structure comprises 296 residues: Ribose import binding protein RbsB (296 aa).

Residues 1-25 form the signal peptide; that stretch reads MNMKKLATLVSAVALSATVSANAMA.

It belongs to the bacterial solute-binding protein 2 family. As to quaternary structure, the complex is composed of an ATP-binding protein (RbsA), two transmembrane proteins (RbsC) and a solute-binding protein (RbsB).

Its subcellular location is the periplasm. Its function is as follows. Part of the ABC transporter complex RbsABC involved in ribose import. Binds ribose. This Salmonella typhi protein is Ribose import binding protein RbsB (rbsB).